A 429-amino-acid chain; its full sequence is Trigger factor (429 aa).

The PPIase FKBP-type domain maps to 164-249 (GDTAVIDFEG…VKEVKTKVLP (86 aa)).

This sequence belongs to the FKBP-type PPIase family. Tig subfamily.

Its subcellular location is the cytoplasm. The catalysed reaction is [protein]-peptidylproline (omega=180) = [protein]-peptidylproline (omega=0). In terms of biological role, involved in protein export. Acts as a chaperone by maintaining the newly synthesized protein in an open conformation. Functions as a peptidyl-prolyl cis-trans isomerase. The protein is Trigger factor of Lysinibacillus sphaericus (strain C3-41).